Here is a 269-residue protein sequence, read N- to C-terminus: 3-deoxy-manno-octulosonate cytidylyltransferase (269 aa).

Belongs to the KdsB family.

Its subcellular location is the cytoplasm. It carries out the reaction 3-deoxy-alpha-D-manno-oct-2-ulosonate + CTP = CMP-3-deoxy-beta-D-manno-octulosonate + diphosphate. It participates in nucleotide-sugar biosynthesis; CMP-3-deoxy-D-manno-octulosonate biosynthesis; CMP-3-deoxy-D-manno-octulosonate from 3-deoxy-D-manno-octulosonate and CTP: step 1/1. The protein operates within bacterial outer membrane biogenesis; lipopolysaccharide biosynthesis. Its function is as follows. Activates KDO (a required 8-carbon sugar) for incorporation into bacterial lipopolysaccharide in Gram-negative bacteria. The chain is 3-deoxy-manno-octulosonate cytidylyltransferase from Cupriavidus taiwanensis (strain DSM 17343 / BCRC 17206 / CCUG 44338 / CIP 107171 / LMG 19424 / R1) (Ralstonia taiwanensis (strain LMG 19424)).